Reading from the N-terminus, the 211-residue chain is Large ribosomal subunit protein uL3 (211 aa).

This sequence belongs to the universal ribosomal protein uL3 family. As to quaternary structure, part of the 50S ribosomal subunit. Forms a cluster with proteins L14 and L19.

One of the primary rRNA binding proteins, it binds directly near the 3'-end of the 23S rRNA, where it nucleates assembly of the 50S subunit. The chain is Large ribosomal subunit protein uL3 from Desulfatibacillum aliphaticivorans.